Here is an 874-residue protein sequence, read N- to C-terminus: Probable inorganic carbon transporter subunit DabA (874 aa).

Residues Cys398, Asp400, His580, and Cys595 each coordinate Zn(2+).

The protein belongs to the inorganic carbon transporter (TC 9.A.2) DabA family. Forms a complex with DabB. Zn(2+) serves as cofactor.

It is found in the cell membrane. Its function is as follows. Part of an energy-coupled inorganic carbon pump. The chain is Probable inorganic carbon transporter subunit DabA from Bacillus cereus (strain AH187).